Consider the following 865-residue polypeptide: Leucine--tRNA ligase (865 aa).

The 'HIGH' region signature appears at 41–51 (PYPSGRIHMGH). The short motif at 614–618 (KMSKS) is the 'KMSKS' region element. Residue Lys617 participates in ATP binding.

Belongs to the class-I aminoacyl-tRNA synthetase family.

It is found in the cytoplasm. It catalyses the reaction tRNA(Leu) + L-leucine + ATP = L-leucyl-tRNA(Leu) + AMP + diphosphate. The protein is Leucine--tRNA ligase of Rhodospirillum centenum (strain ATCC 51521 / SW).